Reading from the N-terminus, the 248-residue chain is Deoxyribose-phosphate aldolase (248 aa).

D106 serves as the catalytic Proton donor/acceptor. K168 serves as the catalytic Schiff-base intermediate with acetaldehyde. The active-site Proton donor/acceptor is K197.

It belongs to the DeoC/FbaB aldolase family. DeoC type 1 subfamily.

It is found in the cytoplasm. It carries out the reaction 2-deoxy-D-ribose 5-phosphate = D-glyceraldehyde 3-phosphate + acetaldehyde. It participates in carbohydrate degradation; 2-deoxy-D-ribose 1-phosphate degradation; D-glyceraldehyde 3-phosphate and acetaldehyde from 2-deoxy-alpha-D-ribose 1-phosphate: step 2/2. Functionally, catalyzes a reversible aldol reaction between acetaldehyde and D-glyceraldehyde 3-phosphate to generate 2-deoxy-D-ribose 5-phosphate. The sequence is that of Deoxyribose-phosphate aldolase from Rhizobium meliloti (strain 1021) (Ensifer meliloti).